Here is a 285-residue protein sequence, read N- to C-terminus: tRNA uridine(34) hydroxylase (285 aa).

One can recognise a Rhodanese domain in the interval 130–225; it reads RGDDVVFFDG…YGEAFGDTGL (96 aa). Catalysis depends on Cys185, which acts as the Cysteine persulfide intermediate.

The protein belongs to the TrhO family.

It catalyses the reaction uridine(34) in tRNA + AH2 + O2 = 5-hydroxyuridine(34) in tRNA + A + H2O. Catalyzes oxygen-dependent 5-hydroxyuridine (ho5U) modification at position 34 in tRNAs. The chain is tRNA uridine(34) hydroxylase from Rhodococcus opacus (strain B4).